The following is a 143-amino-acid chain: Large ribosomal subunit protein uL11 (143 aa).

The protein belongs to the universal ribosomal protein uL11 family. As to quaternary structure, part of the ribosomal stalk of the 50S ribosomal subunit. Interacts with L10 and the large rRNA to form the base of the stalk. L10 forms an elongated spine to which L12 dimers bind in a sequential fashion forming a multimeric L10(L12)X complex. Post-translationally, one or more lysine residues are methylated.

Its function is as follows. Forms part of the ribosomal stalk which helps the ribosome interact with GTP-bound translation factors. This chain is Large ribosomal subunit protein uL11, found in Cupriavidus metallidurans (strain ATCC 43123 / DSM 2839 / NBRC 102507 / CH34) (Ralstonia metallidurans).